The chain runs to 319 residues: MAPLESPATASSSEVESSSEEIFKSSSEESKPKDPVTVPSSKTLKSPSAAVNSKTDSSDDSEKQSFVLTRRKKKEGAAESPAVKSGKKRAGEGSTSRDMHVKRVKKEDDNKKANPQRVWSEEDEISLLQAVIDFKAETGTSPWDHKNAFFDIAKKSISFDVSHVQFFDKIRRLKNKYFVNRKNKSGESNHDKKCLGLAVLIWGSDGMNVESPVKKDESILVKGKANSKEKKVEKPLVIEDEQVILGADSEWFEESFLVPVIANLGLDEYSVKKKWSKVSLETKKKIQEKMKVVDAKKCELLLAEMDVLKDVTSVLAQTN.

A disordered region spans residues Met1 to Trp119. The span at Glu21 to Asp34 shows a compositional bias: basic and acidic residues. The span at Val38–Thr55 shows a compositional bias: polar residues. Positions Arg89–Lys112 are enriched in basic and acidic residues.

Belongs to the GeBP family. As to expression, expressed strongly in leaves and flowers, weakly in roots, and very weakly in stems.

It localises to the nucleus. In terms of biological role, transcription repressor that binds DNA in a sequence-specific manner, 5'-GCCT-3', to regulate the expression of PGR. Acts as a modulatory component for the glucose-triggered developmental leaf growth process. This Arabidopsis thaliana (Mouse-ear cress) protein is Transcription factor STKL2.